We begin with the raw amino-acid sequence, 513 residues long: GMP synthase [glutamine-hydrolyzing] (513 aa).

Residues 5–196 (QILILDFGSQ…LYDIAKCNKD (192 aa)) form the Glutamine amidotransferase type-1 domain. The active-site Nucleophile is the cysteine 83. Active-site residues include histidine 170 and glutamate 172. Residues 197–388 (WNLDDFIDQQ…LGLPEEMINR (192 aa)) enclose the GMPS ATP-PPase domain. 224-230 (SGGVDSS) is a binding site for ATP.

In terms of assembly, homodimer.

The catalysed reaction is XMP + L-glutamine + ATP + H2O = GMP + L-glutamate + AMP + diphosphate + 2 H(+). Its pathway is purine metabolism; GMP biosynthesis; GMP from XMP (L-Gln route): step 1/1. Its function is as follows. Catalyzes the synthesis of GMP from XMP. This is GMP synthase [glutamine-hydrolyzing] from Mesoplasma florum (strain ATCC 33453 / NBRC 100688 / NCTC 11704 / L1) (Acholeplasma florum).